Here is a 1543-residue protein sequence, read N- to C-terminus: MSAAGVPAELNNLGAPITATTQNPSGLANSQVTSGPVSSATQHDEHRSSAGNTLADEEDDKAVEAEKAEAIDAAGDGKQKRLPADSSEDIVAELEPHHVSVHRGKEEFAALERKYSNLSQRSQHELHRPTTRHSVRSSFSRKDRVVSRLTQDDAEKAKEGEGEFNLVEVLRSGRENQDEAGIKRKAVGVVWEDHEVIGAGGMRINIRNFSSAIIEQFMMPAIKVLGIFGFNPFAPKPKAILHPSSGLLKPGEMCLVLGRPEAGCTTFLKTITNQRAGYMEINGNVEYAGVGWKEMRKRYAGEVVYNQEDDDHLPTLTVAQTIRFALATKTPKKKIPGVSAKQFQDDMLDLLLSMLNIKHTANTIVGNAFVRGVSGGERKRVSIAEMFCSGATVCSWDNSTRGLDASTALDYAKSLRLLTDIMGQTTFVSLYQAGEGIYDQFDKVLVLNEGHVAYFGPAKEARQYMIGLGYRDLPRQTTADYLSGCTDVNERRFADGRDATNVPATPEEMGQAYRESEICARMTREREEYKHLMAEDATARENFKQAVLEQKHKGVGKKSPYTVSFLQQVFIIFKRQLRLKFQDHFGISTGFATSIIIALIVGSVYFRLPETASGAFTRGGLLFLGLLFNALTSFSELPSQMLGRSVLYRQNEYRFYRPAAFALAAVLADVPYNASVIFLFSIVLYFMGGLYSSGGAFFMFFLFVFLTFMVMSAFFRTLGVATSDYNVAARLASVLISFMVTYTGYMIPVQRMKRWLFWIFYLNPLSYGYEAIFANEFSRISLTCDSSYTIPRNIPEAGITGYPDTLGPNQMCSIFGSTPGDPNVSGSDYMAVGYSYYKAHIWRNFGILLGFFTFFMFLQMLFIEVLEQGAKHFSINVYKKEDKDLKAKNERLAERREAFRAGELEQDLSELKMRPEPFTWEGLSYTVPVPGGHRQLLNDIYGYVKPGSLTALMGASGAGKTTLLDVLASRKNIGVVEGDILMNGRPIGTDFQRGCAYAEQQDTHEWTTTVREALQYSAYLRQPQHVPKQEKDDYVEDIIELLELQELADAMIGFPNYGLSVEARKRVTIGVELAAKPELLLFLDEPTSGLDGQSAYNIVRFLKKLCAAGQKILCTIHQPNALLFQSFDRLLLLQRGGECVYFGDIGPDSKVLIDYLERNGAEVPHDANPAEFMLEAIGAGSRKRIGSDWGEKWRNSPEFAEVKREIQELKAEALAKPIEEKSNRTEYATSFLFQLKTVLHRTNVALWRNADYQWTRLFAHLAIGLIVTLTFLQLDNSVQSLQYRVFAIFFATVLPALILAQIEPQYIMSRMTFNREASSKMYSSTVFALTQLLSEMPYSLGCAVSFFLLLYYGVGFPYASSRAGYFFLMILVTEVYAVTLGQAVAALSPTILIAALFNPFLLVLFSIFCGVTAPPPTLPYFWRKWMWPLDPFTRLISGLVSTVLQDQEVVCKDGEYQVFPAPSGQTCQQWAGAFAEAVGGYINNPDSTGDCQFCQYRSGQAFFVPLEISFSTRWRDFGIFICYVVFNILVLLIAARFLKWQRR.

Residues 1 to 85 (MSAAGVPAEL…DGKQKRLPAD (85 aa)) form a disordered region. Polar residues predominate over residues 18–41 (TATTQNPSGLANSQVTSGPVSSAT). Over residues 62–83 (AVEAEKAEAIDAAGDGKQKRLP) the composition is skewed to basic and acidic residues. Residue N117 is glycosylated (N-linked (GlcNAc...) asparagine). The disordered stretch occupies residues 119–157 (SQRSQHELHRPTTRHSVRSSFSRKDRVVSRLTQDDAEKA). The span at 140-157 (SRKDRVVSRLTQDDAEKA) shows a compositional bias: basic and acidic residues. 2 N-linked (GlcNAc...) asparagine glycosylation sites follow: N208 and N398. The ABC transporter 1 domain maps to 222-474 (IKVLGIFGFN…MIGLGYRDLP (253 aa)). The next 5 membrane-spanning stretches (helical) occupy residues 585-605 (FGIS…GSVY), 619-639 (GGLL…ELPS), 670-690 (VPYN…MGGL), 695-715 (GAFF…SAFF), and 727-747 (VAAR…GYMI). N823 carries N-linked (GlcNAc...) asparagine glycosylation. A helical transmembrane segment spans residues 845–865 (FGILLGFFTFFMFLQMLFIEV). The 243-residue stretch at 918-1160 (FTWEGLSYTV…VLIDYLERNG (243 aa)) folds into the ABC transporter 2 domain. 954-961 (GASGAGKT) is an ATP binding site. N-linked (GlcNAc...) asparagine glycosylation occurs at N1223. 6 helical membrane-spanning segments follow: residues 1254–1274 (WTRL…FLQL), 1285–1305 (VFAI…IEPQ), 1336–1356 (MPYS…GVGF), 1366–1386 (FFLM…AVAA), 1391–1411 (ILIA…FCGV), and 1517–1537 (FGIF…AARF).

This sequence belongs to the ABC transporter superfamily. ABCG family. PDR (TC 3.A.1.205) subfamily.

Its subcellular location is the cell membrane. The enzyme catalyses itraconazole(in) + ATP + H2O = itraconazole(out) + ADP + phosphate + H(+). The catalysed reaction is voriconazole(in) + ATP + H2O = voriconazole(out) + ADP + phosphate + H(+). It carries out the reaction fluconazole(in) + ATP + H2O = fluconazole(out) + ADP + phosphate + H(+). Its function is as follows. Major pleiotropic ABC efflux transporter that confers resistance to structurally and functionally unrelated compounds including azoles such as fluconazole (FLC), itraconazole (ITC), posaconazole (POS), and voriconazole (VRC). Is also able to efflux the eukaryote protein synthesis inhibitor cycloheximide (CHX). This Cryptococcus neoformans var. grubii serotype A (strain H99 / ATCC 208821 / CBS 10515 / FGSC 9487) (Filobasidiella neoformans var. grubii) protein is ABC multidrug transporter AFR1.